The following is a 195-amino-acid chain: Protein LIGHT-DEPENDENT SHORT HYPOCOTYLS 7 (195 aa).

Disordered stretches follow at residues 1-41 (MASH…LSRY) and 154-195 (SQAK…NLAS). A compositionally biased stretch (pro residues) spans 21–36 (QPQPQPHQPQSPPNPP). The ALOG domain maps to 40–167 (RYESQKRRDW…ARGVPYKKRK (128 aa)). A compositionally biased stretch (basic residues) spans 162-175 (PYKKRKKRKKRNPM). Positions 165 to 169 (KRKKR) match the Nuclear localization signal motif. Residues 184–195 (TTGTSSSSNLAS) are compositionally biased toward low complexity.

It belongs to the plant homeotic and developmental regulators ALOG protein family.

Its subcellular location is the nucleus. Its function is as follows. Probable transcription regulator that acts as a developmental regulator by promoting cell growth in response to light. The chain is Protein LIGHT-DEPENDENT SHORT HYPOCOTYLS 7 (LSH7) from Arabidopsis thaliana (Mouse-ear cress).